The sequence spans 198 residues: Imidazoleglycerol-phosphate dehydratase (198 aa).

This sequence belongs to the imidazoleglycerol-phosphate dehydratase family.

It localises to the cytoplasm. It carries out the reaction D-erythro-1-(imidazol-4-yl)glycerol 3-phosphate = 3-(imidazol-4-yl)-2-oxopropyl phosphate + H2O. It participates in amino-acid biosynthesis; L-histidine biosynthesis; L-histidine from 5-phospho-alpha-D-ribose 1-diphosphate: step 6/9. The protein is Imidazoleglycerol-phosphate dehydratase of Streptomyces griseus subsp. griseus (strain JCM 4626 / CBS 651.72 / NBRC 13350 / KCC S-0626 / ISP 5235).